The primary structure comprises 294 residues: MKGSSKAIKRVLEHLQSTGRVLGTVESKVPAGISEEAALSGGHQQLQIKKPLILQFRSYNPYLVKEDIVSILPENQYKKRGQFTNGLDFQLIKVRDPKYFQFKDQYYLLFNDHNSLVEYADLTRLSRINKVRVRMTPLMQPLPNLMTKFQRYSQNLHNAFQSSEKYFEGLTEKIDAKNMIDVTQLWRVLDSVREMESKSVLVWNFPTELQSSNILNYFWFYNIRSSFKMYWDDEMKRNLRFISFENSNDAYRFKRNYHGLLAKELLNPPRKEKDTLETNSVIDDSKLLIEHLNE.

It localises to the mitochondrion inner membrane. Its function is as follows. Activator of specific mitochondrial mRNAs. PET54 is involved in the excision of intron aI5-beta from pre-mRNA for cytochrome c oxidase I (COX1) and plays a role in promoting the translation of COX3. This is Protein PET54 (PET54) from Saccharomyces bayanus (Yeast).